A 233-amino-acid chain; its full sequence is Large ribosomal subunit protein uL1 (233 aa).

Belongs to the universal ribosomal protein uL1 family. Part of the 50S ribosomal subunit.

Binds directly to 23S rRNA. The L1 stalk is quite mobile in the ribosome, and is involved in E site tRNA release. Its function is as follows. Protein L1 is also a translational repressor protein, it controls the translation of the L11 operon by binding to its mRNA. The sequence is that of Large ribosomal subunit protein uL1 from Syntrophomonas wolfei subsp. wolfei (strain DSM 2245B / Goettingen).